Reading from the N-terminus, the 416-residue chain is Adipocyte plasma membrane-associated protein (416 aa).

Residues 1-32 (MSEADGLRQRRPLRPQVVTDDDGQAPEAKDGS) form a disordered region. Residue Ser2 is modified to N-acetylserine. Topologically, residues 2–40 (SEADGLRQRRPLRPQVVTDDDGQAPEAKDGSSFSGRVFR) are cytoplasmic. Thr19 is modified (phosphothreonine). Residues 41–61 (VTFLMLAVSLTVPLLGAMMLL) form a helical; Signal-anchor for type II membrane protein membrane-spanning segment. Over 62 to 416 (ESPIDPQPLS…FLCRLSLQAV (355 aa)) the chain is Extracellular. Asn160 and Asn196 each carry an N-linked (GlcNAc...) asparagine glycan.

It belongs to the strictosidine synthase family. As to expression, liver, glomerular and tubular structures of the kidney, endothelial cells, arterial wall and pancreatic islets of Langerhans (at protein level). Found ubiquitously in adult as well as in embryonic tissues. In adult tissue, the highest expression is found in the liver, placenta and heart. Found on the cell surface of monocytes. In embryonic tissue, the highest expression levels is found in the liver and the kidney.

Its subcellular location is the membrane. Its function is as follows. Exhibits strong arylesterase activity with beta-naphthyl acetate and phenyl acetate. May play a role in adipocyte differentiation. The protein is Adipocyte plasma membrane-associated protein (APMAP) of Homo sapiens (Human).